A 164-amino-acid polypeptide reads, in one-letter code: SsrA-binding protein (164 aa).

Belongs to the SmpB family.

The protein resides in the cytoplasm. Functionally, required for rescue of stalled ribosomes mediated by trans-translation. Binds to transfer-messenger RNA (tmRNA), required for stable association of tmRNA with ribosomes. tmRNA and SmpB together mimic tRNA shape, replacing the anticodon stem-loop with SmpB. tmRNA is encoded by the ssrA gene; the 2 termini fold to resemble tRNA(Ala) and it encodes a 'tag peptide', a short internal open reading frame. During trans-translation Ala-aminoacylated tmRNA acts like a tRNA, entering the A-site of stalled ribosomes, displacing the stalled mRNA. The ribosome then switches to translate the ORF on the tmRNA; the nascent peptide is terminated with the 'tag peptide' encoded by the tmRNA and targeted for degradation. The ribosome is freed to recommence translation, which seems to be the essential function of trans-translation. This is SsrA-binding protein from Corynebacterium glutamicum (strain R).